Reading from the N-terminus, the 369-residue chain is Tetraacyldisaccharide 4'-kinase (369 aa).

Position 68 to 75 (68 to 75 (VVGGTGKT)) interacts with ATP.

The protein belongs to the LpxK family.

It carries out the reaction a lipid A disaccharide + ATP = a lipid IVA + ADP + H(+). It functions in the pathway glycolipid biosynthesis; lipid IV(A) biosynthesis; lipid IV(A) from (3R)-3-hydroxytetradecanoyl-[acyl-carrier-protein] and UDP-N-acetyl-alpha-D-glucosamine: step 6/6. Functionally, transfers the gamma-phosphate of ATP to the 4'-position of a tetraacyldisaccharide 1-phosphate intermediate (termed DS-1-P) to form tetraacyldisaccharide 1,4'-bis-phosphate (lipid IVA). In Chlamydia muridarum (strain MoPn / Nigg), this protein is Tetraacyldisaccharide 4'-kinase.